A 171-amino-acid polypeptide reads, in one-letter code: MEKRLQEAQLYKEEGNQRYREGKYRDAVSRYHRALLQLRGLDPSLPSPIPNLGPQGPALTPEQENILHTIQTDCYNNLAACLLQMEPVKYERVREYSQKVLERQPENAKALYRAGVAFFHLQDYDQARHYLLAAVNRQPKDANVRRYLQLTQSELSSYHRKEKQLYLGMFA.

TPR repeat units follow at residues 8-41 (AQLY…LRGL), 72-107 (TDCY…QPEN), and 108-141 (AKAL…QPKD).

This sequence belongs to the TTC9 family.

This chain is Tetratricopeptide repeat protein 9C (Ttc9c), found in Rattus norvegicus (Rat).